The sequence spans 341 residues: MADGCCPGNTTAIPAVPTITTYPVKGGFRHALCLPSSCHSRMWQLVTCQESCQPSIGAPSGCDPASCQPTRLPATSCVGFVCQPMCSHAACYQSGTGQSPCLVSSCQPSCSESTCCQEKCCDASPCQQSSCQESVCMSGSCQAACGQSVCCDAGSCQPSCSEVTSCPETSCLPTICTASPCQPTWCQGSSCQPVSGEGQPCKSTYYQPICYIFKPCQSALYMPVPCQPSTCVFSSCNTTCCVPSHCQPPHCQLVPSTCFIYQPVANCQAPCSTKNCCKPASCDTVISGQPTCDGPPSYNQSGCKSACCVTGLGTSPSSGSNCLPTSCQPSCESSFCKATLC.

Tandem repeats lie at residues 5–9, 115–119, 120–124, 150–154, 240–244, 276–280, and 307–311. Positions 5–311 are 7 X 5 AA repeats of C-C-X(3); it reads CCPGNTTAIP…GCKSACCVTG (307 aa).

It belongs to the KRTAP type 10 family.

This Homo sapiens (Human) protein is Keratin-associated protein 29-1 (KRTAP29-1).